The following is a 435-amino-acid chain: MSNKDRHIDSSCSSFIKTEPSSPASLTDSVNHHSPGGSSDASGSYSSTMNGHQNGLDSPPLYPSAPILGGSGPVRKLYDDCSSTIVEDPQTKCEYMLNSMPKRLCLVCGDIASGYHYGVASCEACKAFFKRTIQGNIEYSCPATNECEITKRRRKSCQACRFMKCLKVGMLKEGVRLDRVRGGRQKYKRRIDAENSPYLNPQLVQPAKKPYNKIVSHLLVAEPEKIYAMPDPTVPDSDIKALTTLCDLADRELVVIIGWAKHIPGFSTLSLADQMSLLQSAWMEILILGVVYRSLSFEDELVYADDYIMDEDQSKLAGLLDLNNAILQLVKKYKSMKLEKEEFVTLKAIALANSDSMHIEDVEAVQKLQDVLHEALQDYEAGQHMEDPRRAGKMLMTLPLLRQTSTKAVQHFYNIKLEGKVPMHKLFSEMLEAKV.

Residues M1–S64 form a disordered region. Polar residues predominate over residues S10–S29. Residues S34–S47 are compositionally biased toward low complexity. The nuclear receptor DNA-binding region spans K102–L177. 2 consecutive NR C4-type zinc fingers follow at residues C105–C125 and C141–C160. Positions P210–K434 constitute an NR LBD domain.

It belongs to the nuclear hormone receptor family. NR3 subfamily. In terms of assembly, homodimer. Interacts with NRIP1, NCOA1 and NCOR2. Binds TLE1, PNRC1 and PNRC2. Binds GRIP1. Post-translationally, acetylated by PCAF/KAT2 (in vitro).

The protein resides in the nucleus. Its function is as follows. Orphan receptor that acts as a transcription activator in the absence of bound ligand. Binds specifically to an estrogen response element and activates reporter genes controlled by estrogen response elements. Induces the expression of PERM1 in the skeletal muscle. This chain is Estrogen-related receptor gamma (ESRRG), found in Pongo abelii (Sumatran orangutan).